Reading from the N-terminus, the 269-residue chain is GTP cyclohydrolase FolE2 (269 aa).

Belongs to the GTP cyclohydrolase IV family.

The enzyme catalyses GTP + H2O = 7,8-dihydroneopterin 3'-triphosphate + formate + H(+). It participates in cofactor biosynthesis; 7,8-dihydroneopterin triphosphate biosynthesis; 7,8-dihydroneopterin triphosphate from GTP: step 1/1. In terms of biological role, converts GTP to 7,8-dihydroneopterin triphosphate. In Burkholderia ambifaria (strain ATCC BAA-244 / DSM 16087 / CCUG 44356 / LMG 19182 / AMMD) (Burkholderia cepacia (strain AMMD)), this protein is GTP cyclohydrolase FolE2.